We begin with the raw amino-acid sequence, 108 residues long: Movement protein TGB2 (108 aa).

Residues 1 to 8 (MPLTPPPN) are Cytoplasmic-facing. Residues 9 to 29 (YTGLYIAAALGVSLAAVVALF) traverse the membrane as a helical segment. Residues 30–72 (TRSTLPIVGDSQHNLPHGGRYRDGTKAIDYFKPTKLNSVEPGN) are Lumenal-facing. The helical transmembrane segment at 73 to 93 (YWYTQPWLLVILLVALICLSG) threads the bilayer. Over 94-108 (RHAQCCPRCNRVHSA) the chain is Cytoplasmic.

This sequence belongs to the Tymovirales TGBp2 protein family.

Its subcellular location is the host endoplasmic reticulum membrane. Its function is as follows. Plays a role in viral cell-to-cell propagation, by facilitating genome transport to neighboring plant cells through plasmosdesmata,. The polypeptide is Movement protein TGB2 (Solanum tuberosum (Potato)).